Consider the following 119-residue polypeptide: NAD(P)H-quinone oxidoreductase subunit M (119 aa).

It belongs to the complex I NdhM subunit family. In terms of assembly, NDH-1 can be composed of about 15 different subunits; different subcomplexes with different compositions have been identified which probably have different functions.

Its subcellular location is the cellular thylakoid membrane. It carries out the reaction a plastoquinone + NADH + (n+1) H(+)(in) = a plastoquinol + NAD(+) + n H(+)(out). The catalysed reaction is a plastoquinone + NADPH + (n+1) H(+)(in) = a plastoquinol + NADP(+) + n H(+)(out). In terms of biological role, NDH-1 shuttles electrons from an unknown electron donor, via FMN and iron-sulfur (Fe-S) centers, to quinones in the respiratory and/or the photosynthetic chain. The immediate electron acceptor for the enzyme in this species is believed to be plastoquinone. Couples the redox reaction to proton translocation, and thus conserves the redox energy in a proton gradient. Cyanobacterial NDH-1 also plays a role in inorganic carbon-concentration. In Picosynechococcus sp. (strain ATCC 27264 / PCC 7002 / PR-6) (Agmenellum quadruplicatum), this protein is NAD(P)H-quinone oxidoreductase subunit M.